The chain runs to 439 residues: Arginine biosynthesis bifunctional protein ArgJ, mitochondrial (439 aa).

6 residues coordinate substrate: threonine 175, lysine 201, threonine 212, glutamate 301, asparagine 434, and serine 439. The Nucleophile role is filled by threonine 212.

This sequence belongs to the ArgJ family. Heterodimer of an alpha and a beta chain. Post-translationally, the alpha and beta chains are autoproteolytically processed from a single precursor protein within the mitochondrion.

The protein resides in the mitochondrion matrix. The catalysed reaction is N(2)-acetyl-L-ornithine + L-glutamate = N-acetyl-L-glutamate + L-ornithine. It carries out the reaction L-glutamate + acetyl-CoA = N-acetyl-L-glutamate + CoA + H(+). It functions in the pathway amino-acid biosynthesis; L-arginine biosynthesis; L-ornithine and N-acetyl-L-glutamate from L-glutamate and N(2)-acetyl-L-ornithine (cyclic): step 1/1. It participates in amino-acid biosynthesis; L-arginine biosynthesis; N(2)-acetyl-L-ornithine from L-glutamate: step 1/4. In terms of biological role, catalyzes two activities which are involved in the cyclic version of arginine biosynthesis: the synthesis of acetylglutamate from glutamate and acetyl-CoA, and of ornithine by transacetylation between acetylornithine and glutamate. The polypeptide is Arginine biosynthesis bifunctional protein ArgJ, mitochondrial (ECM42) (Candida albicans (strain SC5314 / ATCC MYA-2876) (Yeast)).